The chain runs to 429 residues: Adenylosuccinate synthetase (429 aa).

GTP is bound by residues 12 to 18 and 40 to 42; these read GDEGKGK and GHT. D13 (proton acceptor) is an active-site residue. Mg(2+)-binding residues include D13 and G40. Residues 13 to 16, 38 to 41, T128, R142, Q223, T238, and R302 contribute to the IMP site; these read DEGK and NAGH. The active-site Proton donor is the H41. 298–304 provides a ligand contact to substrate; the sequence is VNTGRKR. GTP contacts are provided by residues R304, 330–332, and 412–414; these read KLD and GVG.

The protein belongs to the adenylosuccinate synthetase family. Homodimer. The cofactor is Mg(2+).

Its subcellular location is the cytoplasm. The enzyme catalyses IMP + L-aspartate + GTP = N(6)-(1,2-dicarboxyethyl)-AMP + GDP + phosphate + 2 H(+). The protein operates within purine metabolism; AMP biosynthesis via de novo pathway; AMP from IMP: step 1/2. Its function is as follows. Plays an important role in the de novo pathway of purine nucleotide biosynthesis. Catalyzes the first committed step in the biosynthesis of AMP from IMP. This chain is Adenylosuccinate synthetase, found in Corynebacterium efficiens (strain DSM 44549 / YS-314 / AJ 12310 / JCM 11189 / NBRC 100395).